We begin with the raw amino-acid sequence, 581 residues long: Putative protein phosphatase 2C 22 (581 aa).

Residues Met-1–Ala-21 form the signal peptide. Residues Lys-102 to Phe-478 form the PPM-type phosphatase domain. Positions 138, 139, 373, and 469 each coordinate Mn(2+). The tract at residues Ser-538–Leu-563 is disordered.

The protein belongs to the PP2C family. It depends on Mg(2+) as a cofactor. Mn(2+) is required as a cofactor.

The catalysed reaction is O-phospho-L-seryl-[protein] + H2O = L-seryl-[protein] + phosphate. It catalyses the reaction O-phospho-L-threonyl-[protein] + H2O = L-threonyl-[protein] + phosphate. The protein is Putative protein phosphatase 2C 22 of Oryza sativa subsp. japonica (Rice).